The following is a 225-amino-acid chain: Membrane protein (225 aa).

Over 1–20 (MDNTTNCTLGTEQAVQLFKE) the chain is Virion surface. Residues 21-41 (YNLFVTAFLLFLTILLQYGYA) form a helical membrane-spanning segment. Residues 42-51 (TRNKVIYILK) lie on the Intravirion side of the membrane. A helical membrane pass occupies residues 52–72 (MIVLWCFWPLNIAVGAISCIY). The Virion surface portion of the chain corresponds to 73–77 (PPNTG). A helical transmembrane segment spans residues 78–98 (GLVAAIILTVFACLSFIGYWI). Residues 99 to 225 (QSFRLFKRCR…VATGGSSLYT (127 aa)) are Intravirion-facing.

Belongs to the gammacoronaviruses M protein family. In terms of assembly, homomultimer. Interacts with envelope E protein in the budding compartment of the host cell, which is located between endoplasmic reticulum and the Golgi complex. Forms a complex with HE and S proteins. Interacts with nucleocapsid N protein. This interaction probably participates in RNA packaging into the virus.

It localises to the virion membrane. It is found in the host Golgi apparatus membrane. Functionally, component of the viral envelope that plays a central role in virus morphogenesis and assembly via its interactions with other viral proteins. This Avian infectious bronchitis virus (strain 6/82) (IBV) protein is Membrane protein.